We begin with the raw amino-acid sequence, 788 residues long: Protein TRS1 (788 aa).

2 disordered regions span residues 1–82 (MAQR…NFWH) and 610–663 (IHKK…PSRV). The segment covering 16-25 (RGRGAGGPSG) has biased composition (gly residues). Residues 26-56 (VGSSPPSSCVPMGATSTAGTGASAAPTATPG) are compositionally biased toward low complexity. The tract at residues 74–248 (SGNNSNFWHG…HGAGEVVRLY (175 aa)) is RNA-binding. A compositionally biased stretch (basic and acidic residues) spans 651-660 (LRRDDEDWKP). Positions 672–788 (LDETFWVLGS…NVATHYHYNA (117 aa)) are interaction with host EIF2AK2/PKR.

This sequence belongs to the herpesviridae US22 family. Interacts with host EIF2AK2/PKR; this interaction retains EIF2AK2 to the host nucleus and prevents its activation. Interaction (via N-terminus) with host BECN1; this interaction inhibits host autophagy. Interacts with the viral DNA polymerase accessory subunit UL44. Interacts with host HSPA5.

It localises to the virion. It is found in the host cytoplasm. The protein localises to the host nucleus. Functionally, inhibits the establishment of the antiviral state in the infected cell. Prevents the phosphorylation of the host eukaryotic translation initiation factor eIF-2alpha/EIF2S1 and thus the shutoff of viral and cellular protein synthesis by directly interacting with EIF2AK2/PKR. Prevents stress granule formation in response to eIF-2alpha/EIF2S1 phosphorylation, thereby rescuing viral replication and protein synthesis. Also inhibits host autophagy by interacting with host Beclin-1/BECN1. The polypeptide is Protein TRS1 (TRS1) (Human cytomegalovirus (strain Merlin) (HHV-5)).